The following is a 102-amino-acid chain: Matrix Gla protein (102 aa).

Phosphoserine is present on residues S2, S3, and S5. The tract at residues 18 to 45 (DANSFMRQPRPPNHWDSRDRFKSPRERT) is disordered. Residues 27–73 (RPPNHWDSRDRFKSPRERTREKCEEYRPCERLARQVGLKRAYGKYFG) form the Gla domain. Over residues 30-45 (NHWDSRDRFKSPRERT) the composition is skewed to basic and acidic residues. Residues E43, E47, E50, and E51 each carry the 4-carboxyglutamate modification. A disulfide bridge links C49 with C55. The interval 72 to 102 (FGNRRQRPSTSGRLRPRKYRASRYRNHHYRY) is disordered. The span at 85-102 (LRPRKYRASRYRNHHYRY) shows a compositional bias: basic residues.

It belongs to the osteocalcin/matrix Gla protein family. Post-translationally, requires vitamin K-dependent gamma-carboxylation for its function. In terms of tissue distribution, accounts for 35-40% of the total protein in the acid demineralization extract of calcified cartilage.

Its subcellular location is the secreted. Its function is as follows. Associates with the organic matrix of calcified cartilage. This is Matrix Gla protein (mgp) from Galeorhinus galeus (Tope shark).